A 388-amino-acid chain; its full sequence is Formate-dependent phosphoribosylglycinamide formyltransferase (388 aa).

Residues 11–12 and Glu71 contribute to the N(1)-(5-phospho-beta-D-ribosyl)glycinamide site; that span reads EL. ATP is bound by residues Arg103, Lys144, 149-154, 184-187, and Glu192; these read SSGKGQ and EEFI. The region spanning 108–300 is the ATP-grasp domain; it reads DLAAKELGLK…EFELHLRAVL (193 aa). 2 residues coordinate Mg(2+): Glu257 and Glu270. Residues Asp277, Lys349, and 356-357 each bind N(1)-(5-phospho-beta-D-ribosyl)glycinamide; that span reads RR.

Belongs to the PurK/PurT family. As to quaternary structure, homodimer.

The enzyme catalyses N(1)-(5-phospho-beta-D-ribosyl)glycinamide + formate + ATP = N(2)-formyl-N(1)-(5-phospho-beta-D-ribosyl)glycinamide + ADP + phosphate + H(+). It functions in the pathway purine metabolism; IMP biosynthesis via de novo pathway; N(2)-formyl-N(1)-(5-phospho-D-ribosyl)glycinamide from N(1)-(5-phospho-D-ribosyl)glycinamide (formate route): step 1/1. Involved in the de novo purine biosynthesis. Catalyzes the transfer of formate to 5-phospho-ribosyl-glycinamide (GAR), producing 5-phospho-ribosyl-N-formylglycinamide (FGAR). Formate is provided by PurU via hydrolysis of 10-formyl-tetrahydrofolate. This is Formate-dependent phosphoribosylglycinamide formyltransferase from Bacteroides fragilis (strain ATCC 25285 / DSM 2151 / CCUG 4856 / JCM 11019 / LMG 10263 / NCTC 9343 / Onslow / VPI 2553 / EN-2).